The following is a 239-amino-acid chain: Ribosomal RNA small subunit methyltransferase G (239 aa).

S-adenosyl-L-methionine contacts are provided by residues Gly-79, Phe-84, 130–131, and Arg-149; that span reads AE.

This sequence belongs to the methyltransferase superfamily. RNA methyltransferase RsmG family.

It is found in the cytoplasm. Functionally, specifically methylates the N7 position of a guanine in 16S rRNA. This Pelotomaculum thermopropionicum (strain DSM 13744 / JCM 10971 / SI) protein is Ribosomal RNA small subunit methyltransferase G.